The primary structure comprises 149 residues: Nucleoside diphosphate kinase (149 aa).

6 residues coordinate ATP: Lys9, Phe57, Arg85, Thr91, Arg102, and Asn112. His115 serves as the catalytic Pros-phosphohistidine intermediate.

This sequence belongs to the NDK family. As to quaternary structure, homotetramer. Mg(2+) serves as cofactor.

Its subcellular location is the cytoplasm. The enzyme catalyses a 2'-deoxyribonucleoside 5'-diphosphate + ATP = a 2'-deoxyribonucleoside 5'-triphosphate + ADP. It carries out the reaction a ribonucleoside 5'-diphosphate + ATP = a ribonucleoside 5'-triphosphate + ADP. Major role in the synthesis of nucleoside triphosphates other than ATP. The ATP gamma phosphate is transferred to the NDP beta phosphate via a ping-pong mechanism, using a phosphorylated active-site intermediate. The chain is Nucleoside diphosphate kinase from Trichodesmium erythraeum (strain IMS101).